The chain runs to 165 residues: Glycine cleavage system H protein, mitochondrial (165 aa).

The N-terminal 34 residues, 1 to 34 (MALRMWASSTANALKLSSSSRLHLSPTFSISRCF), are a transit peptide targeting the mitochondrion. Residues 56-138 (VATIGITDHA…YEDGWMIKIK (83 aa)) enclose the Lipoyl-binding domain. Lys97 is modified (N6-lipoyllysine).

Belongs to the GcvH family. As to quaternary structure, the glycine cleavage system is composed of four proteins: P, T, L and H. The cofactor is (R)-lipoate.

It is found in the mitochondrion. Functionally, the glycine cleavage system catalyzes the degradation of glycine. The H protein shuttles the methylamine group of glycine from the P protein to the T protein. This chain is Glycine cleavage system H protein, mitochondrial (GDCSH), found in Pisum sativum (Garden pea).